A 331-amino-acid polypeptide reads, in one-letter code: Adenosine deaminase (331 aa).

Residues histidine 12 and histidine 14 each coordinate Zn(2+). Substrate contacts are provided by histidine 14, aspartate 16, and glycine 170. Zn(2+) is bound at residue histidine 197. The active-site Proton donor is the glutamate 200. A Zn(2+)-binding site is contributed by aspartate 278. Residue aspartate 279 participates in substrate binding.

This sequence belongs to the metallo-dependent hydrolases superfamily. Adenosine and AMP deaminases family. Adenosine deaminase subfamily. Requires Zn(2+) as cofactor.

The catalysed reaction is adenosine + H2O + H(+) = inosine + NH4(+). The enzyme catalyses 2'-deoxyadenosine + H2O + H(+) = 2'-deoxyinosine + NH4(+). Its function is as follows. Catalyzes the hydrolytic deamination of adenosine and 2-deoxyadenosine. This Shewanella loihica (strain ATCC BAA-1088 / PV-4) protein is Adenosine deaminase.